The sequence spans 249 residues: 5'-nucleotidase SurE (249 aa).

Positions 9, 10, 40, and 92 each coordinate a divalent metal cation.

The protein belongs to the SurE nucleotidase family. The cofactor is a divalent metal cation.

The protein resides in the cytoplasm. It carries out the reaction a ribonucleoside 5'-phosphate + H2O = a ribonucleoside + phosphate. Functionally, nucleotidase that shows phosphatase activity on nucleoside 5'-monophosphates. The polypeptide is 5'-nucleotidase SurE (Shewanella baltica (strain OS223)).